A 1856-amino-acid polypeptide reads, in one-letter code: DNA-directed RNA polymerase II subunit RPB1 (1856 aa).

Zn(2+) contacts are provided by Cys66, Cys69, Cys76, His79, Cys106, Cys109, Cys149, and Cys177. The lid loop stretch occupies residues 256 to 268 (PAVVTFGSAKNQD). Residues 314-331 (NCIPGLPTATQKGGRPLK) are rudder loop. Mg(2+) is bound by residues Asp489, Asp491, and Asp493. Positions 827-839 (PSEFFFHAMGGRE) are bridging helix. Lys1260 participates in a covalent cross-link: Glycyl lysine isopeptide (Lys-Gly) (interchain with G-Cter in ubiquitin). The interval 1523 to 1856 (PTTGGMSPGA…PSSPTYDPNS (334 aa)) is disordered. The segment covering 1587 to 1856 (SMTSPHYSPT…PSSPTYDPNS (270 aa)) has biased composition (low complexity). 27 tandem repeats follow at residues 1593–1599 (YSPTSPS), 1600–1606 (YSPTSPA), 1616–1622 (YSPTSPS), 1623–1629 (YSPTSPS), 1630–1636 (YSPTSPS), 1637–1643 (YSPTSPS), 1644–1650 (YSPTSPS), 1651–1657 (YSPTSPS), 1658–1664 (YSPSSPS), 1665–1671 (YSPSSPS), 1672–1678 (YSPSSPR), 1679–1685 (YSPTSPT), 1686–1692 (YSPTSPT), 1693–1699 (YSPTSPT), 1700–1706 (YSPTSPT), 1707–1713 (YSPTSPS), 1720–1726 (YSPSSPK), 1727–1733 (YSPSSPT), 1734–1740 (YSPTSPS), 1741–1747 (YSPTSPQ), 1748–1754 (YSPTSPQ), 1755–1761 (YSPSSPT), 1769–1775 (YNPTSPR), 1782–1788 (YSPTSPT), 1789–1795 (YSPTSPS), 1796–1802 (YTPSSPQ), and 1803–1809 (YSPTSPT). The tract at residues 1593 to 1816 (YSPTSPSYSP…SPTYTPSPSE (224 aa)) is C-terminal domain (CTD); 28 X 7 AA approximate tandem repeats of Y-[ST]-P-[ST]-S-P-[AGKNQRST]. A 28; approximate repeat occupies 1810–1816 (YTPSPSE).

It belongs to the RNA polymerase beta' chain family. Component of the RNA polymerase II (Pol II) complex consisting of 12 subunits. Interacts with sig-7. In terms of processing, the tandem 7 residues repeats in the C-terminal domain (CTD) can be highly phosphorylated. The phosphorylation activates Pol II. Phosphorylation occurs mainly at residues 'Ser-2' and 'Ser-5' of the heptapeptide repeat and starts at the 3- to 4-cell embryonic stage. This phosphorylation also occurs in the early stages of oocyte development and is not detected in oocytes arrested at the meiotic diakinesis stage. In the somatic lineage, phosphorylation at 'Ser-2' is mediated by cdk-12 downstream of cdk-9 whereas in the germline lineage cdk-12 phosphorylates 'Ser-2' independently of cdk-9. Phosphorylation is likely mediated by cdk-7. May be dephosphorylated by fcp-1 in diakinetic oocytes and in 1-cell and 2-cell embryos. Dephosphorylated at 'Ser-5' of the heptapeptide repeats by ssup-72. The phosphorylation state is believed to result from the balanced action of site-specific CTD kinases and phosphatase, and a 'CTD code' that specifies the position of Pol II within the transcription cycle has been proposed. Post-translationally, following transcription stress, the elongating form of RNA polymerase II (RNA pol IIo) is polyubiquitinated via 'Lys-63'-linkages on Lys-1260 at DNA damage sites without leading to degradation: ubiquitination promotes RNA pol IIo backtracking to allow access by the transcription-coupled nucleotide excision repair (TC-NER) machinery. Subsequent DEF1-dependent polyubiquitination by the elongin complex via 'Lys-48'-linkages may lead to proteasome-mediated degradation; presumably at stalled RNA pol II where TC-NER has failed, to halt global transcription and enable 'last resort' DNA repair pathways.

It localises to the nucleus. It is found in the chromosome. It carries out the reaction RNA(n) + a ribonucleoside 5'-triphosphate = RNA(n+1) + diphosphate. In terms of biological role, DNA-dependent RNA polymerase catalyzes the transcription of DNA into RNA using the four ribonucleoside triphosphates as substrates. Largest and catalytic component of RNA polymerase II which synthesizes mRNA precursors and many functional non-coding RNAs. Forms the polymerase active center together with the second largest subunit. Pol II is the central component of the basal RNA polymerase II transcription machinery. It is composed of mobile elements that move relative to each other. RPB1 is part of the core element with the central large cleft, the clamp element that moves to open and close the cleft and the jaws that are thought to grab the incoming DNA template. At the start of transcription, a single-stranded DNA template strand of the promoter is positioned within the central active site cleft of Pol II. A bridging helix emanates from RPB1 and crosses the cleft near the catalytic site and is thought to promote translocation of Pol II by acting as a ratchet that moves the RNA-DNA hybrid through the active site by switching from straight to bent conformations at each step of nucleotide addition. During transcription elongation, Pol II moves on the template as the transcript elongates. Elongation is influenced by the phosphorylation status of the C-terminal domain (CTD) of Pol II largest subunit (RPB1), which serves as a platform for assembly of factors that regulate transcription initiation, elongation, termination and mRNA processing. Involved in the transcription of several genes including those involved in embryogenesis. This chain is DNA-directed RNA polymerase II subunit RPB1, found in Caenorhabditis elegans.